The chain runs to 155 residues: Regulatory protein RecX (155 aa).

Belongs to the RecX family.

It localises to the cytoplasm. Functionally, modulates RecA activity. In Pseudomonas entomophila (strain L48), this protein is Regulatory protein RecX.